We begin with the raw amino-acid sequence, 429 residues long: Acetylornithine aminotransferase (429 aa).

Pyridoxal 5'-phosphate-binding positions include 126–127 (GA) and Phe160. A N(2)-acetyl-L-ornithine-binding site is contributed by Arg163. Residue 251 to 254 (DEVQ) participates in pyridoxal 5'-phosphate binding. Position 280 is an N6-(pyridoxal phosphate)lysine (Lys280). Ser307 is a binding site for N(2)-acetyl-L-ornithine. Residue Thr308 participates in pyridoxal 5'-phosphate binding.

It belongs to the class-III pyridoxal-phosphate-dependent aminotransferase family. ArgD subfamily. Homodimer. It depends on pyridoxal 5'-phosphate as a cofactor.

The protein resides in the cytoplasm. The enzyme catalyses N(2)-acetyl-L-ornithine + 2-oxoglutarate = N-acetyl-L-glutamate 5-semialdehyde + L-glutamate. Its pathway is amino-acid biosynthesis; L-arginine biosynthesis; N(2)-acetyl-L-ornithine from L-glutamate: step 4/4. N-acetylornithine aminotransferase activity is stimulated by the addition of Mg(2+), Ca(2+) or Mn(2+), and inhibited by the addition of Zn(2+), Cu(2+), Co(2+) or Ni(2+). Its function is as follows. Catalyzes the reversible conversion of N-acetylornithine to N-acetylglutamate-5-semialdehyde. In vitro, also shows very low ornithine aminotransferase (OAT) and gamma-aminobutyrate aminotransferase (GABA-AT) activity, catalyzing the conversion of ornithine (Orn) to glutamate-5-semialdehyde and of gamma-aminobutyric acid (GABA) to succinate semialdehyde. It has been shown to function as a GABA-AT and contributes to closing the tricarboxylic acid cycle of Synechocystis sp. PCC6803 via the GABA shunt. However, the catalytic efficiency toward N-acetylornithine is 2500-fold and 10700-fold higher than that toward ornithine and gamma-aminobutyrate, respectively, indicating that the protein mainly functions as an N-acetylornithine aminotransferase. The polypeptide is Acetylornithine aminotransferase (Synechocystis sp. (strain ATCC 27184 / PCC 6803 / Kazusa)).